A 605-amino-acid polypeptide reads, in one-letter code: Granule-bound starch synthase 1, chloroplastic/amyloplastic (605 aa).

The transit peptide at 1–72 directs the protein to the chloroplast; sequence MAALATSQLV…GGRFPSLVVC (72 aa). Position 91 (Lys91) interacts with ADP-alpha-D-glucose.

Belongs to the glycosyltransferase 1 family. Bacterial/plant glycogen synthase subfamily.

It is found in the plastid. The protein resides in the chloroplast. Its subcellular location is the amyloplast. The enzyme catalyses an NDP-alpha-D-glucose + [(1-&gt;4)-alpha-D-glucosyl](n) = [(1-&gt;4)-alpha-D-glucosyl](n+1) + a ribonucleoside 5'-diphosphate + H(+). It participates in glycan biosynthesis; starch biosynthesis. Functionally, required for the synthesis of amylose in endosperm. This chain is Granule-bound starch synthase 1, chloroplastic/amyloplastic (WAXY), found in Zea mays (Maize).